A 587-amino-acid chain; its full sequence is D-lactate dehydrogenase [cytochrome] 1, mitochondrial (587 aa).

The region spanning 146–327 is the FAD-binding PCMH-type domain; the sequence is SPEQRPRIIL…TEATVKCHVK (182 aa).

The protein belongs to the FAD-binding oxidoreductase/transferase type 4 family. Requires FAD as cofactor.

It is found in the mitochondrion inner membrane. It carries out the reaction (R)-lactate + 2 Fe(III)-[cytochrome c] = 2 Fe(II)-[cytochrome c] + pyruvate + 2 H(+). Catalyzes the stereospecific oxidation of D-lactate to pyruvate. The sequence is that of D-lactate dehydrogenase [cytochrome] 1, mitochondrial from Saccharomyces cerevisiae (strain ATCC 204508 / S288c) (Baker's yeast).